We begin with the raw amino-acid sequence, 428 residues long: Trigger factor (428 aa).

The region spanning 163–248 (GNIAVIDFKG…VKEIKVKELP (86 aa)) is the PPIase FKBP-type domain.

It belongs to the FKBP-type PPIase family. Tig subfamily.

The protein resides in the cytoplasm. It carries out the reaction [protein]-peptidylproline (omega=180) = [protein]-peptidylproline (omega=0). In terms of biological role, involved in protein export. Acts as a chaperone by maintaining the newly synthesized protein in an open conformation. Functions as a peptidyl-prolyl cis-trans isomerase. The protein is Trigger factor of Clostridium perfringens (strain ATCC 13124 / DSM 756 / JCM 1290 / NCIMB 6125 / NCTC 8237 / Type A).